A 213-amino-acid chain; its full sequence is MAAPAVSGFSRQVRCFSTSVVRPFTKLVRPPVQIYGIEGRYATALYSAASKQNKLEQVEKELLRVAQLLKEPKMAASIMNPYIKRSIKVKSLNDMTTKEKFSPLTSNLMNLLAENGRLNNTPGVISAFSTIMSVHRGEVPCSVTTASPLDEATLSELKTVLQSFLSKNQILKLEVKTDPSIMGGMIIRIGEKYVDMSAKTKIQKLSRVMREVF.

Residues methionine 1–proline 23 constitute a mitochondrion transit peptide. The SIFI-degron signature appears at alanine 5–proline 23. 4 positions are modified to N6-acetyllysine: lysine 54, lysine 60, lysine 70, and lysine 73. An N6-succinyllysine modification is found at lysine 90. Lysine 100 and lysine 158 each carry N6-acetyllysine; alternate. N6-succinyllysine; alternate occurs at positions 100 and 158. Residues lysine 172, lysine 176, and lysine 192 each carry the N6-acetyllysine modification. The residue at position 199 (lysine 199) is an N6-succinyllysine.

This sequence belongs to the ATPase delta chain family. In terms of assembly, component of the ATP synthase complex composed at least of ATP5F1A/subunit alpha, ATP5F1B/subunit beta, ATP5MC1/subunit c (homooctomer), MT-ATP6/subunit a, MT-ATP8/subunit 8, ATP5ME/subunit e, ATP5MF/subunit f, ATP5MG/subunit g, ATP5MK/subunit k, ATP5MJ/subunit j, ATP5F1C/subunit gamma, ATP5F1D/subunit delta, ATP5F1E/subunit epsilon, ATP5PF/subunit F6, ATP5PB/subunit b, ATP5PD/subunit d, ATP5PO/subunit OSCP. ATP synthase complex consists of a soluble F(1) head domain (subunits alpha(3) and beta(3)) - the catalytic core - and a membrane F(0) domain - the membrane proton channel (subunits c, a, 8, e, f, g, k and j). These two domains are linked by a central stalk (subunits gamma, delta, and epsilon) rotating inside the F1 region and a stationary peripheral stalk (subunits F6, b, d, and OSCP). Post-translationally, in response to mitochondrial stress, the precursor protein is ubiquitinated by the SIFI complex in the cytoplasm before mitochondrial import, leading to its degradation. Within the SIFI complex, UBR4 initiates ubiquitin chain that are further elongated or branched by KCMF1.

Its subcellular location is the mitochondrion. It is found in the mitochondrion inner membrane. In terms of biological role, subunit OSCP, of the mitochondrial membrane ATP synthase complex (F(1)F(0) ATP synthase or Complex V) that produces ATP from ADP in the presence of a proton gradient across the membrane which is generated by electron transport complexes of the respiratory chain. ATP synthase complex consist of a soluble F(1) head domain - the catalytic core - and a membrane F(1) domain - the membrane proton channel. These two domains are linked by a central stalk rotating inside the F(1) region and a stationary peripheral stalk. During catalysis, ATP synthesis in the catalytic domain of F(1) is coupled via a rotary mechanism of the central stalk subunits to proton translocation. In vivo, can only synthesize ATP although its ATP hydrolase activity can be activated artificially in vitro. Part of the complex F(0) domain. Part of the complex F(0) domain and the peripheric stalk, which acts as a stator to hold the catalytic alpha(3)beta(3) subcomplex and subunit a/ATP6 static relative to the rotary elements. The chain is ATP synthase peripheral stalk subunit OSCP, mitochondrial from Rhinolophus ferrumequinum (Greater horseshoe bat).